Consider the following 205-residue polypeptide: Imidazole glycerol phosphate synthase subunit HisH (205 aa).

One can recognise a Glutamine amidotransferase type-1 domain in the interval 3-205; it reads KIGLIDYGMG…LLRRWIKSIQ (203 aa). Catalysis depends on cysteine 81, which acts as the Nucleophile. Active-site residues include histidine 185 and glutamate 187.

As to quaternary structure, heterodimer of HisH and HisF.

It localises to the cytoplasm. It catalyses the reaction 5-[(5-phospho-1-deoxy-D-ribulos-1-ylimino)methylamino]-1-(5-phospho-beta-D-ribosyl)imidazole-4-carboxamide + L-glutamine = D-erythro-1-(imidazol-4-yl)glycerol 3-phosphate + 5-amino-1-(5-phospho-beta-D-ribosyl)imidazole-4-carboxamide + L-glutamate + H(+). The enzyme catalyses L-glutamine + H2O = L-glutamate + NH4(+). Its pathway is amino-acid biosynthesis; L-histidine biosynthesis; L-histidine from 5-phospho-alpha-D-ribose 1-diphosphate: step 5/9. Its function is as follows. IGPS catalyzes the conversion of PRFAR and glutamine to IGP, AICAR and glutamate. The HisH subunit catalyzes the hydrolysis of glutamine to glutamate and ammonia as part of the synthesis of IGP and AICAR. The resulting ammonia molecule is channeled to the active site of HisF. This is Imidazole glycerol phosphate synthase subunit HisH from Prochlorococcus marinus subsp. pastoris (strain CCMP1986 / NIES-2087 / MED4).